A 418-amino-acid polypeptide reads, in one-letter code: Deubiquitinase and deneddylase Dub1 (418 aa).

Positions 1–10 are enriched in polar residues; the sequence is MLSPTNSISK. The interval 1-23 is disordered; sequence MLSPTNSISKTAPVPPQDSSKPV. Residues 40 to 60 form a helical membrane-spanning segment; sequence TALAVLLVVVTLGLILLFYSF. The tract at residues 72 to 144 is disordered; that stretch reads TRPSTKEQPT…PLPPKAPKPV (73 aa). Residues 86–141 are compositionally biased toward pro residues; that stretch reads VPLPSPPLAVPRPSTPPPPVISRPSTPPAPTPAISPPSTPSAPKPSTPPPLPPKAP. Residues His288, Asp305, and Cys358 contribute to the active site.

Belongs to the peptidase C48 family.

The protein localises to the secreted. Its subcellular location is the host cell. It localises to the membrane. In terms of biological role, effector proteins function to alter host cell physiology and promote bacterial survival in host tissues. This protease possesses deubiquitinating and deneddylating activities. The polypeptide is Deubiquitinase and deneddylase Dub1 (cdu1) (Chlamydia trachomatis serovar B (strain TZ1A828/OT)).